The sequence spans 174 residues: Single-stranded DNA-binding protein 1 (174 aa).

The 106-residue stretch at 6-111 folds into the SSB domain; it reads VNKVILVGNL…VVVNVGGTMQ (106 aa). The DNA-binding element occupies 55-61; that stretch reads WHRVVLF. The disordered stretch occupies residues 110-174; sequence MQMLGGRQGG…PMDFDDDIPF (65 aa). Residues 115–133 are compositionally biased toward gly residues; that stretch reads GRQGGGAPAGGGQQQGGWG. Low complexity predominate over residues 134-160; the sequence is QPQQPQGGNQFSGGAQSRPQQQAPAAP. An Important for interaction with partner proteins motif is present at residues 169–174; sequence DDDIPF.

In terms of assembly, homotetramer. Binds PriA via its C-terminus.

Plays an important role in DNA replication, recombination and repair. Binds to ssDNA and to an array of partner proteins to recruit them to their sites of action during DNA metabolism. Stimulates the ATPase activity of PriA. One tetramer binds to 26 nucleotides (nt) of ssDNA, a 55 nt piece of ssDNA probably binds 2 tetramers. The protein is Single-stranded DNA-binding protein 1 of Klebsiella pneumoniae subsp. pneumoniae (strain ATCC 700721 / MGH 78578).